A 187-amino-acid chain; its full sequence is NADH-quinone oxidoreductase subunit C 2 (187 aa).

The segment at 153–187 (YKDKLNPFGAEGPPPTQPDLATRDIPQGRPSTPES) is disordered.

This sequence belongs to the complex I 30 kDa subunit family. In terms of assembly, NDH-1 is composed of 14 different subunits. Subunits NuoB, C, D, E, F, and G constitute the peripheral sector of the complex.

Its subcellular location is the cell inner membrane. The catalysed reaction is a quinone + NADH + 5 H(+)(in) = a quinol + NAD(+) + 4 H(+)(out). Functionally, NDH-1 shuttles electrons from NADH, via FMN and iron-sulfur (Fe-S) centers, to quinones in the respiratory chain. The immediate electron acceptor for the enzyme in this species is believed to be ubiquinone. Couples the redox reaction to proton translocation (for every two electrons transferred, four hydrogen ions are translocated across the cytoplasmic membrane), and thus conserves the redox energy in a proton gradient. This is NADH-quinone oxidoreductase subunit C 2 from Rhizobium etli (strain CIAT 652).